Consider the following 339-residue polypeptide: Fructose-1,6-bisphosphatase class 1 (339 aa).

4 residues coordinate Mg(2+): Glu-94, Asp-116, Leu-118, and Asp-119. Residues 119-122, Asn-210, and Lys-276 contribute to the substrate site; that span reads DGSS. Mg(2+) is bound at residue Glu-282.

Belongs to the FBPase class 1 family. As to quaternary structure, homotetramer. Mg(2+) serves as cofactor.

Its subcellular location is the cytoplasm. The catalysed reaction is beta-D-fructose 1,6-bisphosphate + H2O = beta-D-fructose 6-phosphate + phosphate. Its pathway is carbohydrate biosynthesis; gluconeogenesis. The sequence is that of Fructose-1,6-bisphosphatase class 1 from Burkholderia ambifaria (strain MC40-6).